We begin with the raw amino-acid sequence, 491 residues long: MEEIPAQEAAGSPRVQFQSLETQSECLSPEPQFVQDTDMEQGLTGDGETREENKLLIPKQKISEEVHSYKVRVGRLKHDITQVPETREVYKSEDRLERLQEILRKFLYLEREFRQITISKETFTSEKNNECHEPEKSFSLDSTIDADQRVLRIQNTDDNDKYDMSFNQNSASGKHEHLNLTEDFQSSECKESLMDLSHLNKWESIPNTEKSYKCDVCGKIFHQSSALTRHQRIHTREKPYKCKECEKSFSQSSSLSRHKRIHTREKPYKCEASDKSCEASDKSCSPSSGIIQHKKIHTRAKSYKCSSCERVFSRSVHLTQHQKIHKEMPCKCTVCGSDFCHTSYLLEHQRVHHEEKAYEYDEYGLAYIKQQGIHFREKPYTCSECGKDFRLNSHLIQHQRIHTGEKAHECNECGKAFSQTSCLIQHHKMHRKEKSYECNEYEGSFSHSSDLILQQEVLTRQKAFDCDVWEKNSSQRAHLVQHQSIHTKENS.

Residues 1 to 52 (MEEIPAQEAAGSPRVQFQSLETQSECLSPEPQFVQDTDMEQGLTGDGETREE) form a disordered region. Residues 15 to 26 (VQFQSLETQSEC) show a composition bias toward polar residues. At Gln60 the chain carries Phosphoserine. Glycyl lysine isopeptide (Lys-Gly) (interchain with G-Cter in SUMO2) cross-links involve residues Lys77, Lys190, and Lys201. 6 consecutive C2H2-type zinc fingers follow at residues 212–234 (YKCD…QRIH), 240–262 (YKCK…KRIH), 303–325 (YKCS…QKIH), 330–353 (CKCT…RVHH), 380–402 (YTCS…QRIH), and 408–430 (HECN…HKMH).

This sequence belongs to the krueppel C2H2-type zinc-finger protein family. Interacts with VAV1 and CDK4. Interacts with INTS13; promoting association with the integrator complex.

The protein localises to the nucleus. Probable transcription factor. This chain is Zinc finger protein 655, found in Homo sapiens (Human).